Here is a 78-residue protein sequence, read N- to C-terminus: uncharacterized protein (78 aa).

The disordered stretch occupies residues 1-78 (MSSNSNTDHS…VDLEGPKDEQ (78 aa)). 2 stretches are compositionally biased toward basic and acidic residues: residues 10-33 (STGDNRSKSEKQTDLRNALRETES) and 63-78 (LNLKEPVDLEGPKDEQ).

This is an uncharacterized protein from Schizosaccharomyces pombe (strain 972 / ATCC 24843) (Fission yeast).